A 165-amino-acid polypeptide reads, in one-letter code: Large ribosomal subunit protein uL10 (165 aa).

Belongs to the universal ribosomal protein uL10 family. In terms of assembly, part of the ribosomal stalk of the 50S ribosomal subunit. The N-terminus interacts with L11 and the large rRNA to form the base of the stalk. The C-terminus forms an elongated spine to which L12 dimers bind in a sequential fashion forming a multimeric L10(L12)X complex.

Its function is as follows. Forms part of the ribosomal stalk, playing a central role in the interaction of the ribosome with GTP-bound translation factors. This chain is Large ribosomal subunit protein uL10, found in Burkholderia cenocepacia (strain HI2424).